The following is a 451-amino-acid chain: Phosphoglucosamine mutase (451 aa).

Catalysis depends on S107, which acts as the Phosphoserine intermediate. The Mg(2+) site is built by S107, D246, D248, and D250. S107 carries the phosphoserine modification.

The protein belongs to the phosphohexose mutase family. It depends on Mg(2+) as a cofactor. In terms of processing, activated by phosphorylation.

The enzyme catalyses alpha-D-glucosamine 1-phosphate = D-glucosamine 6-phosphate. Catalyzes the conversion of glucosamine-6-phosphate to glucosamine-1-phosphate. The chain is Phosphoglucosamine mutase from Burkholderia multivorans (strain ATCC 17616 / 249).